Consider the following 319-residue polypeptide: Ferrochelatase (319 aa).

Fe cation is bound by residues His192 and Glu271.

The protein belongs to the ferrochelatase family.

The protein resides in the cytoplasm. The catalysed reaction is heme b + 2 H(+) = protoporphyrin IX + Fe(2+). It functions in the pathway porphyrin-containing compound metabolism; protoheme biosynthesis; protoheme from protoporphyrin-IX: step 1/1. In terms of biological role, catalyzes the ferrous insertion into protoporphyrin IX. This chain is Ferrochelatase, found in Geotalea daltonii (strain DSM 22248 / JCM 15807 / FRC-32) (Geobacter daltonii).